Reading from the N-terminus, the 359-residue chain is Probably inactive receptor-like protein kinase At5g41680 (359 aa).

The Protein kinase domain maps to 59–357 (AASAEILGKG…KLIQDIPTNF (299 aa)). Residues 65–73 (LGKGAHVTT) and lysine 87 each bind ATP.

Belongs to the protein kinase superfamily. Ser/Thr protein kinase family.

The protein is Probably inactive receptor-like protein kinase At5g41680 of Arabidopsis thaliana (Mouse-ear cress).